Reading from the N-terminus, the 296-residue chain is Small ribosomal subunit biogenesis GTPase RsgA (296 aa).

The 162-residue stretch at 63–224 (KNQLVRPMVA…IADTPGFSSY (162 aa)) folds into the CP-type G domain. Residues 112–115 (SKTD) and 167–175 (GQTGAGKST) contribute to the GTP site. Residues C248, C253, H255, and C261 each coordinate Zn(2+).

The protein belongs to the TRAFAC class YlqF/YawG GTPase family. RsgA subfamily. As to quaternary structure, monomer. Associates with 30S ribosomal subunit, binds 16S rRNA. Zn(2+) serves as cofactor.

The protein resides in the cytoplasm. One of several proteins that assist in the late maturation steps of the functional core of the 30S ribosomal subunit. Helps release RbfA from mature subunits. May play a role in the assembly of ribosomal proteins into the subunit. Circularly permuted GTPase that catalyzes slow GTP hydrolysis, GTPase activity is stimulated by the 30S ribosomal subunit. This Limosilactobacillus fermentum (strain NBRC 3956 / LMG 18251) (Lactobacillus fermentum) protein is Small ribosomal subunit biogenesis GTPase RsgA.